We begin with the raw amino-acid sequence, 188 residues long: Large ribosomal subunit protein eL18 (188 aa).

Lys-119 is covalently cross-linked (Glycyl lysine isopeptide (Lys-Gly) (interchain with G-Cter in SUMO2)). Ser-130 bears the Phosphoserine mark. A disordered region spans residues 151 to 188 (HFGKAPGTPHSHTKPYVRSKGRKFERARGRRASRGYKN). Thr-158 is modified (phosphothreonine). Composition is skewed to basic residues over residues 161–171 (SHTKPYVRSKG) and 178–188 (RGRRASRGYKN). Lys-164 participates in a covalent cross-link: Glycyl lysine isopeptide (Lys-Gly) (interchain with G-Cter in SUMO2).

Belongs to the eukaryotic ribosomal protein eL18 family. In terms of assembly, component of the large ribosomal subunit.

It is found in the cytoplasm. Its subcellular location is the cytosol. The protein localises to the rough endoplasmic reticulum. Component of the large ribosomal subunit. The ribosome is a large ribonucleoprotein complex responsible for the synthesis of proteins in the cell. This Canis lupus familiaris (Dog) protein is Large ribosomal subunit protein eL18 (RPL18).